A 468-amino-acid chain; its full sequence is Protein maelstrom 2 (468 aa).

The segment at residues 2–69 (PPKKHSGFMM…LTRVKKERLN (68 aa)) is a DNA-binding region (HMG box). The disordered stretch occupies residues 374–393 (KEDSPTVLSPASSRRSLASS). Positions 381-393 (LSPASSRRSLASS) are enriched in low complexity.

It belongs to the maelstrom family.

The protein resides in the cytoplasm. Its subcellular location is the nucleus. Its function is as follows. Involved both in the piRNA and miRNA metabolic processes. As a component of the meiotic nuage, plays a central role during oogenesis by repressing transposable elements and preventing their mobilization, which is essential for the germline integrity. Repression of transposable elements is mediated via the piRNA metabolic process, which mediates the repression of transposable elements during meiosis by forming complexes composed of piRNAs and Piwi proteins and governs the repression of transposons. As a nuclear component, it is required for proper differentiation in the germline stem cell (GSC) lineage by repressing microRNA-7 (miR-7), thereby acting as an indirect regulator of bag-of-marbles (Bam). Acts by binding to the promoter of miR-7 gene and repressing its expression; miR-7 repression alleviates the Bam repression by miR-7, thereby allowing differentiation in the germline stem cell (GSC) lineage. The polypeptide is Protein maelstrom 2 (mael2) (Drosophila ananassae (Fruit fly)).